A 703-amino-acid polypeptide reads, in one-letter code: Polyribonucleotide nucleotidyltransferase (703 aa).

Mg(2+) contacts are provided by D488 and D494. A KH domain is found at 555 to 614 (PRLYVMKINPEKIRDVIGKGGAVIRALTEETGTQINIEEDGTITIASNDSAKADEAKRRI). The 69-residue stretch at 624 to 692 (GKVYEGAITK…EKGRVKLSMK (69 aa)) folds into the S1 motif domain.

The protein belongs to the polyribonucleotide nucleotidyltransferase family. Mg(2+) serves as cofactor.

It is found in the cytoplasm. The catalysed reaction is RNA(n+1) + phosphate = RNA(n) + a ribonucleoside 5'-diphosphate. Functionally, involved in mRNA degradation. Catalyzes the phosphorolysis of single-stranded polyribonucleotides processively in the 3'- to 5'-direction. This Polaromonas naphthalenivorans (strain CJ2) protein is Polyribonucleotide nucleotidyltransferase.